The sequence spans 565 residues: Urocanate hydratase (565 aa).

Residues 61-62 (GG), Q139, 185-187 (GMG), E205, R210, 251-252 (NA), 272-276 (QTSAH), 282-283 (YL), and Y331 each bind NAD(+). The active site involves C419. The segment at 453–472 (LDSGSVASPNRETESMRDGS) is disordered. Basic and acidic residues predominate over residues 463–472 (RETESMRDGS). An NAD(+)-binding site is contributed by G501.

The protein belongs to the urocanase family. NAD(+) is required as a cofactor.

The protein localises to the cytoplasm. The catalysed reaction is 4-imidazolone-5-propanoate = trans-urocanate + H2O. It participates in amino-acid degradation; L-histidine degradation into L-glutamate; N-formimidoyl-L-glutamate from L-histidine: step 2/3. Catalyzes the conversion of urocanate to 4-imidazolone-5-propionate. The chain is Urocanate hydratase from Pseudomonas savastanoi pv. phaseolicola (strain 1448A / Race 6) (Pseudomonas syringae pv. phaseolicola (strain 1448A / Race 6)).